Reading from the N-terminus, the 607-residue chain is UvrABC system protein C (607 aa).

The GIY-YIG domain maps to 15–92; the sequence is SQPGSYQMKD…IKRYRPYFNI (78 aa). Residues 197–232 form the UVR domain; that stretch reads GKAISDIKKKMKRASDSTEYELAADFRDRLKFIDQT.

Belongs to the UvrC family. Interacts with UvrB in an incision complex.

Its subcellular location is the cytoplasm. In terms of biological role, the UvrABC repair system catalyzes the recognition and processing of DNA lesions. UvrC both incises the 5' and 3' sides of the lesion. The N-terminal half is responsible for the 3' incision and the C-terminal half is responsible for the 5' incision. This Oenococcus oeni (strain ATCC BAA-331 / PSU-1) protein is UvrABC system protein C.